A 70-amino-acid chain; its full sequence is Large ribosomal subunit protein uL29 (70 aa).

This sequence belongs to the universal ribosomal protein uL29 family.

This is Large ribosomal subunit protein uL29 from Prochlorococcus marinus (strain NATL1A).